The primary structure comprises 130 residues: Serum amyloid A-4 protein (130 aa).

Positions 1 to 18 (MRLATVIVLCSLFLGVSG) are cleaved as a signal peptide. The interval 109-130 (EEWGRSGKNPNHFRPEGLPEKF) is disordered. A compositionally biased stretch (basic and acidic residues) spans 121–130 (FRPEGLPEKF).

Belongs to the SAA family. In terms of assembly, apolipoprotein of the HDL complex. In terms of tissue distribution, expressed by the liver; secreted in plasma.

Its subcellular location is the secreted. Its function is as follows. Major acute phase reactant. This is Serum amyloid A-4 protein from Mus musculus (Mouse).